Reading from the N-terminus, the 204-residue chain is HTH-type transcriptional activator BcrR (204 aa).

The Cytoplasmic portion of the chain corresponds to M1–K81. The 55-residue stretch at L7–L61 folds into the HTH cro/C1-type domain. Residues Q18 to S37 constitute a DNA-binding region (H-T-H motif). The helical transmembrane segment at I82–L102 threads the bilayer. Residues Y103–N126 are Extracellular-facing. The helical transmembrane segment at L127–S147 threads the bilayer. The Cytoplasmic portion of the chain corresponds to T148–K154. The helical transmembrane segment at W155 to A175 threads the bilayer. At A176–Y181 the chain is on the extracellular side. The helical transmembrane segment at I182 to G202 threads the bilayer. At M203–K204 the chain is on the cytoplasmic side.

The protein localises to the cell membrane. Constitutively bound to the bcrABD promoter. Requires bacitracin for activation, probably through a conformational change, such as the oligomerization of inactive dimers to form active tetramers. Functionally, functions both as a membrane-bound sensor and a transducer of bacitracin availability to activate transcription of the bcrABD operon in the presence of bacitracin. Binds specifically to two inverted repeat sequences on the bcrABD promoter, irrespective of bacitracin concentration. This chain is HTH-type transcriptional activator BcrR, found in Enterococcus faecalis (Streptococcus faecalis).